Consider the following 246-residue polypeptide: MAGHSQFSNIKHRKGAQDAKRSQKFTKLIREITVAAKQGLPDPELNPRLRSAIFAARKENLPKDKIETAIKNATGNVAGENYEEIQYEGHGPSGTALIVHALTNNRNRTASEVRYIFSRKGGNLGETGSVSYLFDHVGLIVYKAEGVNFDDLFSHGIELEVLNVEENDKEGLHVITCEIKDFGKVRDAFYAKFGEPELARLSWQPKDLIEISDKELIDKLSALVEELEDNDDVQYVEGNFTFVDKL.

A disordered region spans residues 1-22; it reads MAGHSQFSNIKHRKGAQDAKRS.

Belongs to the TACO1 family.

It localises to the cytoplasm. The chain is Probable transcriptional regulatory protein WRi_002620 from Wolbachia sp. subsp. Drosophila simulans (strain wRi).